Here is a 181-residue protein sequence, read N- to C-terminus: Copper-resistant cuproprotein CopI (181 aa).

The first 24 residues, 1 to 24 (MFPRRLLPASLIVLGVLFGASAQA), serve as a signal peptide directing secretion. His-79, Cys-163, His-168, and Met-173 together coordinate Cu(2+).

Belongs to the CopI family.

The protein localises to the periplasm. Functionally, involved in copper tolerance. The polypeptide is Copper-resistant cuproprotein CopI (Pseudomonas aeruginosa (strain ATCC 15692 / DSM 22644 / CIP 104116 / JCM 14847 / LMG 12228 / 1C / PRS 101 / PAO1)).